Reading from the N-terminus, the 216-residue chain is Endo-1,4-beta-xylanase 2 (216 aa).

A signal peptide spans 1-27 (MVSFSSLFVAACAAVTAFALPNELEKR). The region spanning 28-216 (AITSNEQGTN…SSGSASITVS (189 aa)) is the GH11 domain. N-linked (GlcNAc...) asparagine glycosylation is present at Asn-87. The active-site Nucleophile is Glu-112. Glu-203 functions as the Proton donor in the catalytic mechanism.

It belongs to the glycosyl hydrolase 11 (cellulase G) family.

It localises to the secreted. It catalyses the reaction Endohydrolysis of (1-&gt;4)-beta-D-xylosidic linkages in xylans.. The protein operates within glycan degradation; xylan degradation. In terms of biological role, endo-1,4-beta-xylanase involved in the hydrolysis of xylan, a major structural heterogeneous polysaccharide found in plant biomass representing the second most abundant polysaccharide in the biosphere, after cellulose. In Rhizopus oryzae (Mucormycosis agent), this protein is Endo-1,4-beta-xylanase 2 (xyn2).